Consider the following 448-residue polypeptide: Fibulin-5 (448 aa).

Positions 1 to 23 (MPGFKRILTVTVLALCLPTPGNA) are cleaved as a signal peptide. Residues 42 to 82 (DVDECRTIPEACRGDMMCVNQNGGYLCIPRTNPVYRGPYSN) form the EGF-like 1; calcium-binding domain. 17 disulfides stabilise this stretch: Cys46–Cys59, Cys53–Cys68, Cys131–Cys144, Cys138–Cys153, Cys155–Cys166, Cys172–Cys181, Cys177–Cys190, Cys192–Cys205, Cys211–Cys221, Cys217–Cys230, Cys232–Cys245, Cys251–Cys262, Cys258–Cys271, Cys273–Cys286, Cys292–Cys305, Cys299–Cys314, and Cys320–Cys332. Residues 54–56 (RGD) carry the Cell attachment site motif. Residues 127 to 167 (DVDECATDSHQCNPTQICINTEGGYTCSCTDGYWLLEGQCL) form the EGF-like 2; calcium-binding domain. An EGF-like 3; calcium-binding domain is found at 168-206 (DIDECRYGYCQQLCANVPGSYSCTCNPGFTLNEDGRSCQ). Residues 207-246 (DVNECATENPCVQTCVNTYGSFICRCDPGYELEDDGVHCS) form the EGF-like 4; calcium-binding domain. The interaction with LOXL1 stretch occupies residues 245–448 (CSDMDECSFS…LRIYVSQYPF (204 aa)). The 41-residue stretch at 247–287 (DMDECSFSEFLCQHECVNQPGTYFCSCPAGYILLDDNRSCQ) folds into the EGF-like 5; calcium-binding domain. 2 N-linked (GlcNAc...) asparagine glycosylation sites follow: Asn283 and Asn296. Residues 288-333 (DINECEHRNHTCILQQTCYNLQGGFKCIDPIRCEEPYLRISDNRCM) enclose the EGF-like 6; calcium-binding domain.

It belongs to the fibulin family. As to quaternary structure, homodimer. Monomer, homodimerizes in presence of Ca(2+). Interacts with ELN. Interacts (via N-terminus) with the integrins ITGAV/ITGB3, ITGAV/ITGB5 and ITGA9/ITGB1. Interacts with FBN1 (via N-terminal domain). Forms a ternary complex with ELN and FBN1. Interacts with EFEMP2 with moderate affinity. Interacts with LOXL1. In terms of processing, N-glycosylated.

The protein resides in the secreted. It localises to the extracellular space. Its subcellular location is the extracellular matrix. Functionally, essential for elastic fiber formation, is involved in the assembly of continuous elastin (ELN) polymer and promotes the interaction of microfibrils and ELN. Stabilizes and organizes elastic fibers in the skin, lung and vasculature. Promotes adhesion of endothelial cells through interaction of integrins and the RGD motif. Vascular ligand for integrin receptors which may play a role in vascular development and remodeling. May act as an adapter that mediates the interaction between FBN1 and ELN. This chain is Fibulin-5 (FBLN5), found in Bos taurus (Bovine).